Reading from the N-terminus, the 188-residue chain is Actin-related protein 2/3 complex subunit 3 (188 aa).

It belongs to the ARPC3 family. As to quaternary structure, component of the Arp2/3 complex.

It localises to the cytoplasm. The protein resides in the cytoskeleton. Its function is as follows. Functions as a component of the Arp2/3 complex which is involved in regulation of actin polymerization and together with an activating nucleation-promoting factor (NPF) mediates the formation of branched actin networks. The chain is Actin-related protein 2/3 complex subunit 3 from Entamoeba histolytica (strain ATCC 30459 / HM-1:IMSS / ABRM).